Consider the following 165-residue polypeptide: Ribosome maturation factor RimM (165 aa).

The region spanning 89–161 (EADTHYVVDL…KIVIKPVRQW (73 aa)) is the PRC barrel domain.

It belongs to the RimM family. Binds ribosomal protein uS19.

The protein localises to the cytoplasm. An accessory protein needed during the final step in the assembly of 30S ribosomal subunit, possibly for assembly of the head region. Essential for efficient processing of 16S rRNA. May be needed both before and after RbfA during the maturation of 16S rRNA. It has affinity for free ribosomal 30S subunits but not for 70S ribosomes. This Clostridium botulinum (strain Eklund 17B / Type B) protein is Ribosome maturation factor RimM.